The chain runs to 1081 residues: MPPKMRSSQENVAVSSDATIQASSASSPLQDAMAAVTSLFPLTSPFPDPAKDDTLIPAADILLEQELLRNPDNFRSWSSYIDHIINTNVVKRPPPDVSLTTYQAALLGPLASSTQRTALRRLTSIYERALAQFPTRYSLWRDYLQNRSRFVLGDPKGGSDAKRKRDLQAAREKLDFGPTLIDSVEDEDFGSAYRGGLDGTVGWQEWKSLAALYERALMWLPTMPRLWLSYLSMFIHPQCPPILSFTHARRTFDRALRTLPGSLHLRVWKVYLKWAERRGGETCLRVWRRYLRVDPSLTERYVSILLAQREDQDEPEGEEEEAEDDAQSDRSRKQSGSKALEASKLLLGLARSAMDGTYVSPEGKSPFQLFVEWLELTEKYPEEIGLDPEEEKKYLQHSVALTSDNGMTNARRAPRHIQGKGTAAREIAKASSSKHPETDALDPTRLNVTAIIQKDGLDKFSDQSGRLWTGLATYWIKRGEFDVARDTFEAGIQTVKTVRDFTQIFDAYAETSENVIAFMMDELTEEGGDEEADAEDQEETREDKEAELDRRMQEFEELIERRPLLVNDVLLRRNPDDVQEWEKRVMLYGDNDEKIIETYREAIQKINPRKATPNFHQLFLNFAQFYEYGGSAGLAKRMAEGVEGQEEEEQAEQVEGDLESARKIFEKAITIPFRRVDDLAEIWCEWAEMELRHSNYDEAIRTMARSVAPPRNTKGIQYHDDTLPPQTRLFKSLKLWSFYVDLEESLGDVESTKRVYEKMLELKIASAQIIINYAAFLEDNKYFEESFKVFERGVELFSYPVAFEIWNVYLSKFVKRYGGAKLERARDLFEQALDKCPARFCKPLMLMYGQLEEEHGLVKRAMKIYERATRAVSTDDRFDMYVFYIAKAAATFGLAATRPIYERAIESLPDRQTAEMCLRFAALERKLGEIDRARVIYAHASQFCDPRTQTDFWKEWNQFEIETGSEDTFREMLRIKRSVQAQFNTDVSYIAASALASAQQNQAQRGAQGSSNGHVREDDVDASDPMARVEAASRSAGARQTAFVAASTAASGARSADTTIGDVAKNDEVVGGDDQDDQDLL.

Positions 1-27 (MPPKMRSSQENVAVSSDATIQASSASS) are disordered. HAT repeat units lie at residues 54–86 (TLIPAADILLEQELLRNPDNFRSWSSYIDHIIN), 117–149 (TALRRLTSIYERALAQFPTRYSLWRDYLQNRSR), 204–236 (QEWKSLAALYERALMWLPTMPRLWLSYLSMFIH), and 243–277 (LSFTHARRTFDRALRTLPGSLHLRVWKVYLKWAER). The tract at residues 308–337 (QREDQDEPEGEEEEAEDDAQSDRSRKQSGS) is disordered. Acidic residues predominate over residues 311–326 (DQDEPEGEEEEAEDDA). 2 HAT repeats span residues 444–477 (TRLNVTAIIQKDGLDKFSDQSGRLWTGLATYWIK) and 479–514 (GEFDVARDTFEAGIQTVKTVRDFTQIFDAYAETSEN). A compositionally biased stretch (acidic residues) spans 526-540 (EGGDEEADAEDQEET). The segment at 526–546 (EGGDEEADAEDQEETREDKEA) is disordered. 8 HAT repeats span residues 656–692 (GDLESARKIFEKAITIPFRRVDDLAEIWCEWAEMELR), 711–745 (RNTKGIQYHDDTLPPQTRLFKSLKLWSFYVDLEES), 747–779 (GDVESTKRVYEKMLELKIASAQIIINYAAFLED), 781–815 (KYFEESFKVFERGVELFSYPVAFEIWNVYLSKFVK), 820–854 (AKLERARDLFEQALDKCPARFCKPLMLMYGQLEEE), 856–887 (GLVKRAMKIYERATRAVSTDDRFDMYVFYIAK), 892–926 (FGLAATRPIYERAIESLPDRQTAEMCLRFAALERK), and 928–962 (GEIDRARVIYAHASQFCDPRTQTDFWKEWNQFEIE). 2 stretches are compositionally biased toward low complexity: residues 1001 to 1011 (NQAQRGAQGSS) and 1047 to 1059 (STAASGARSADTT). Disordered stretches follow at residues 1001–1022 (NQAQRGAQGSSNGHVREDDVDA) and 1047–1081 (STAASGARSADTTIGDVAKNDEVVGGDDQDDQDLL). The span at 1070–1081 (VGGDDQDDQDLL) shows a compositional bias: acidic residues.

This sequence belongs to the crooked-neck family. Associated with the spliceosome.

The protein resides in the nucleus. Involved in pre-mRNA splicing and cell cycle progression. This is Pre-mRNA-splicing factor SYF1 (SYF1) from Mycosarcoma maydis (Corn smut fungus).